The primary structure comprises 364 residues: Geissoschizine synthase (364 aa).

A Zn(2+)-binding site is contributed by Cys51. Asn52 is an NADP(+) binding site. Zn(2+)-binding residues include His73, Glu74, Cys104, Cys107, Cys110, Cys118, and Cys168. Positions 194, 196, 197, 216, 217, 218, 221, 261, 280, 282, 304, 306, and 351 each coordinate NADP(+).

This sequence belongs to the zinc-containing alcohol dehydrogenase family. Class-III subfamily. Homodimer. The cofactor is Zn(2+). In terms of tissue distribution, expressed in leaf epidermis.

The enzyme catalyses (19E)-geissoschizine + NADP(+) = 4,21-dehydrogeissoschizine + NADPH. It participates in alkaloid biosynthesis. Functionally, component of the seco-iridoid and derivatives monoterpenoid indole alkaloids (MIAs, e.g. catharanthine, tabersonine, vincadifformine, vindoline, vincristine, quinine and strychnine) biosynthesis pathway. During the conversion of strictosidine aglycone to geissoschizine, catalyzes iminium reduction on 4,21-dehydrogeissoschizine to produce 19E-geissoschizine, precursor of catharanthine and tabersonine derivatives. May also trigger the production of reactive intermediate used by the HL1, HL2, HL3 and HL4 to form catharanthine, vincadifformine and tabersonine. In Catharanthus roseus (Madagascar periwinkle), this protein is Geissoschizine synthase.